A 295-amino-acid chain; its full sequence is Protoheme IX farnesyltransferase 2 (295 aa).

The next 9 membrane-spanning stretches (helical) occupy residues 9-29, 36-56, 83-103, 108-128, 135-155, 163-183, 209-229, 230-250, and 264-284; these read ITKPGIIFGNVLSVAGGFFLA, FALFLAVVIGTSLVVASGCVF, LTLALAYATLLGVAGFSLLYV, LAAFCALVGFVVYVGFYSLWL, GTLVGSLSGAMPPVIGYCAVS, VTLLVMFSLWQMPHSFAIAIF, IVLYVLAFVLATVMLTLGGYA, GLGYLAVAAAMGLYWLYMAWG, and VFGFSILTVTALSVMMSVDSQ.

It belongs to the UbiA prenyltransferase family. Protoheme IX farnesyltransferase subfamily.

Its subcellular location is the cell inner membrane. It catalyses the reaction heme b + (2E,6E)-farnesyl diphosphate + H2O = Fe(II)-heme o + diphosphate. It participates in porphyrin-containing compound metabolism; heme O biosynthesis; heme O from protoheme: step 1/1. Functionally, converts heme B (protoheme IX) to heme O by substitution of the vinyl group on carbon 2 of heme B porphyrin ring with a hydroxyethyl farnesyl side group. This Pseudomonas entomophila (strain L48) protein is Protoheme IX farnesyltransferase 2.